Reading from the N-terminus, the 52-residue chain is Large ribosomal subunit protein bL32c (52 aa).

This sequence belongs to the bacterial ribosomal protein bL32 family.

The protein resides in the plastid. It is found in the chloroplast. The sequence is that of Large ribosomal subunit protein bL32c from Aethionema grandiflorum (Persian stone-cress).